Consider the following 672-residue polypeptide: DNA ligase (672 aa).

Residues 34 to 38 (DAEYD), 83 to 84 (SL), and Glu-117 each bind NAD(+). Catalysis depends on Lys-119, which acts as the N6-AMP-lysine intermediate. 4 residues coordinate NAD(+): Arg-140, Glu-177, Lys-293, and Lys-317. Zn(2+) is bound by residues Cys-411, Cys-414, Cys-429, and Cys-434. Residues 591-672 (RVGGRFTGKT…FLAMLGVCRT (82 aa)) form the BRCT domain.

This sequence belongs to the NAD-dependent DNA ligase family. LigA subfamily. It depends on Mg(2+) as a cofactor. Mn(2+) is required as a cofactor.

The catalysed reaction is NAD(+) + (deoxyribonucleotide)n-3'-hydroxyl + 5'-phospho-(deoxyribonucleotide)m = (deoxyribonucleotide)n+m + AMP + beta-nicotinamide D-nucleotide.. DNA ligase that catalyzes the formation of phosphodiester linkages between 5'-phosphoryl and 3'-hydroxyl groups in double-stranded DNA using NAD as a coenzyme and as the energy source for the reaction. It is essential for DNA replication and repair of damaged DNA. The chain is DNA ligase from Geotalea uraniireducens (strain Rf4) (Geobacter uraniireducens).